Here is a 363-residue protein sequence, read N- to C-terminus: MKRVFNFSPGPAAIPQEVIQQAADEMANWRGCGLSVMEMSHRGREFTEILATTKDDLRSLMSIPDNYKILLMQGGAIAENAIVPMNLVGMKPQPATIDFVNTGHWSIKSIEEARKYANVNVAASSEDQNFTYVPARDTWKLTPDAAYVHVCTNETIGGVEFDFTPDVGNVPLVADMSSNILSREIDVSRYAVIYAGAQKNIGPAGLTIVIVRDDMLGHALPICPSAFDWKLVAEHDSMFNTPPTYPIYIAGLTFQWMKRQGGVAAMEKVNIAKAKLLYDYLDSTDFYVNNVPAANRSRMNVPFFLRDASLNTKFLTEAGQNDLVQLKGHSSVGGMRASIYNAMPIEGVQALVDFMKAFEKKYG.

Arginine 42 provides a ligand contact to L-glutamate. Tryptophan 105, threonine 155, aspartate 175, and glutamine 198 together coordinate pyridoxal 5'-phosphate. An N6-(pyridoxal phosphate)lysine modification is found at lysine 199. Position 240-241 (asparagine 240–threonine 241) interacts with pyridoxal 5'-phosphate.

The protein belongs to the class-V pyridoxal-phosphate-dependent aminotransferase family. SerC subfamily. Homodimer. Pyridoxal 5'-phosphate is required as a cofactor.

The protein localises to the cytoplasm. It catalyses the reaction O-phospho-L-serine + 2-oxoglutarate = 3-phosphooxypyruvate + L-glutamate. It carries out the reaction 4-(phosphooxy)-L-threonine + 2-oxoglutarate = (R)-3-hydroxy-2-oxo-4-phosphooxybutanoate + L-glutamate. It functions in the pathway amino-acid biosynthesis; L-serine biosynthesis; L-serine from 3-phospho-D-glycerate: step 2/3. The protein operates within cofactor biosynthesis; pyridoxine 5'-phosphate biosynthesis; pyridoxine 5'-phosphate from D-erythrose 4-phosphate: step 3/5. Its function is as follows. Catalyzes the reversible conversion of 3-phosphohydroxypyruvate to phosphoserine and of 3-hydroxy-2-oxo-4-phosphonooxybutanoate to phosphohydroxythreonine. The chain is Phosphoserine aminotransferase from Herminiimonas arsenicoxydans.